The sequence spans 450 residues: MSIINSIDCHVIGIYFYNVILEKNLIIWQLNIITCSSHESTFCFVVDLLTAEDRDSILRVCSDQPTPQHHGVSLMTWELKLRMSQPILQTCMNNIRKPITILMSTDKVALEARPVLEKEACSGRYLKGAYLYSQCSQILASVPKLTLENNVQQWYPYLLNNSTIEDLEIHIKCSEGLYTCSSNSEPPLKKTQHLKIEDVFKIVDHSFLVAKTNIHIRTVIPIFHLLWVNVECKWNGCLPEFFRALHSKVYREFTGIAPIFTYLFPGGCPEATPFDIYFCGFPFVNLNCGKPEKILLCDLPRLHCPQILLSIPGNHADDLLCQPRDIPLPSIPKIWPINGIDINSKFCLEETSEIAFLNFKHIIVEVDFLCTICYIMGCKSDEIYNIMKFGSNNLNSTLQTWYNWFISTIFKWATQRSFNWTAMTQFKVYLSAVYASEIPKVSYKLVKDYE.

It belongs to the herpesviridae BBLF2 family.

This is an uncharacterized protein from Saimiriine herpesvirus 2 (strain 11) (SaHV-2).